The following is a 104-amino-acid chain: Increased recombination centers protein 13 (104 aa).

A helical membrane pass occupies residues 63 to 83; that stretch reads LVHLFSYVFFLFLLKICVDVL.

The protein resides in the membrane. Its function is as follows. May be involved in a pathway contributing to genomic integrity. The sequence is that of Increased recombination centers protein 13 (IRC13) from Saccharomyces cerevisiae (strain ATCC 204508 / S288c) (Baker's yeast).